Reading from the N-terminus, the 469-residue chain is Melanopsin (469 aa).

At 1 to 71 the chain is on the extracellular side; sequence MDSPPGPTAP…VDVPDHAHYI (71 aa). The N-linked (GlcNAc...) asparagine glycan is linked to asparagine 30. Residues 72–92 traverse the membrane as a helical segment; it reads LGTVILLVGLTGMLGNLTVIY. Residues 93–106 lie on the Cytoplasmic side of the membrane; it reads TFCRSRSLRTPANM. Residues 107–127 form a helical membrane-spanning segment; sequence LIINLAVSDFLMSFTQAPVFF. Over 128-143 the chain is Extracellular; it reads ASSLYKKWLFGETGCE. Residues cysteine 142 and cysteine 220 are joined by a disulfide bond. The helical transmembrane segment at 144-164 threads the bilayer; that stretch reads FYAFCGAVLGITSMITLTAIA. The Cytoplasmic portion of the chain corresponds to 165–187; sequence LDRYLVITRPLATIGMGSKRRTA. Residues 188–208 form a helical membrane-spanning segment; the sequence is LVLLGIWLYALAWSLPPFFGW. At 209 to 237 the chain is on the extracellular side; sequence SAYVPEGLLTSCSWDYVTFTPQVRAYTML. Residues 238 to 258 form a helical membrane-spanning segment; the sequence is LFCFVFFLPLLVIIFCYISIF. Topologically, residues 259 to 295 are cytoplasmic; it reads RAIRETGRACEGWSESPQRRRQWHRLQSEWKMAKVAL. The helical transmembrane segment at 296-316 threads the bilayer; it reads IVILLFVLSWAPYSTVALVAF. Residues 317 to 328 lie on the Extracellular side of the membrane; sequence AGYSHILTPYMS. The helical transmembrane segment at 329-349 threads the bilayer; it reads SVPAVIAKASAIHNPIVYAIT. N6-(retinylidene)lysine is present on lysine 336. Topologically, residues 350-469 are cytoplasmic; sequence HPKYRAAIAQ…SLDLGMQDAP (120 aa). The interval 409–469 is disordered; the sequence is GSESEVGWTD…SLDLGMQDAP (61 aa).

It belongs to the G-protein coupled receptor 1 family. Opsin subfamily.

Its subcellular location is the cell membrane. The protein localises to the cell projection. It localises to the axon. It is found in the dendrite. The protein resides in the perikaryon. Photoreceptor that binds cis-retinaldehydes. Contributes to pupillar reflex, photoentrainment and other non-image forming responses to light. May be involved in the optokinetic visual tracking response. May be involved in the regulation of retinal hyaloid vessel growth and regression. The polypeptide is Melanopsin (OPN4) (Phodopus sungorus (Striped hairy-footed hamster)).